The sequence spans 266 residues: MIILKLGGSVITRKDSEEPAIDRDNLERIASEIGNASPSSLMIVHGAGSFGHPFAGEYRIGSEIENEEDLRRRRFGFALTQNWVKKLNSHVCDALLAEGIPAVSMQPSAFIRAHAGRISHADISLIRSYLEEGMVPVVYGDVVLDSDRRLKFSVISGDQLINHFSLRLMPERVILGTDVDGVYTRNPKKHPDARLLDVIGSLDDLESLDGTLNTDVTGGMVGKIRELLLLAEKGVESEIINAAVPGNIERALLGEEVRGTRITGKH.

5–9 is a binding site for ATP; sequence KLGGS. A substrate-binding site is contributed by Ala-47. Gly-48 lines the ATP pocket. The substrate site is built by His-52 and Gly-157. ATP contacts are provided by residues Asp-178, 183-188, Gly-219, and Lys-223; that span reads YTRNPK.

The protein belongs to the isopentenyl phosphate kinase family. In terms of assembly, homodimer.

It carries out the reaction isopentenyl phosphate + ATP = isopentenyl diphosphate + ADP. Its function is as follows. Catalyzes the formation of isopentenyl diphosphate (IPP), the building block of all isoprenoids. Has lower activity with dimethylallyl phosphate (DMAP) and isopentenyl thiolophosphate (ISP). Has low activity with 1-butyl phosphate (BP) and 3-buten-1-yl phosphate (BEP). Has no significant activity with geranyl phosphate (in vitro). The polypeptide is Isopentenyl phosphate kinase (Methanothermobacter thermautotrophicus (strain ATCC 29096 / DSM 1053 / JCM 10044 / NBRC 100330 / Delta H) (Methanobacterium thermoautotrophicum)).